The chain runs to 235 residues: Protocatechuate 3,4-dioxygenase beta chain (235 aa).

Residues Y107, Y146, H159, and H161 each coordinate Fe cation.

It belongs to the intradiol ring-cleavage dioxygenase family. In terms of assembly, the enzyme is an oligomer of 12 copies of the alpha and beta chains. Fe(3+) serves as cofactor.

The enzyme catalyses 3,4-dihydroxybenzoate + O2 = 3-carboxy-cis,cis-muconate + 2 H(+). It participates in aromatic compound metabolism; beta-ketoadipate pathway; 3-carboxy-cis,cis-muconate from 3,4-dihydroxybenzoate: step 1/1. Its function is as follows. Plays an essential role in the utilization of numerous aromatic and hydroaromatic compounds via the beta-ketoadipate pathway. The sequence is that of Protocatechuate 3,4-dioxygenase beta chain (pcaH) from Burkholderia cepacia (Pseudomonas cepacia).